Here is a 61-residue protein sequence, read N- to C-terminus: Insect toxin BsIT3 (61 aa).

The region spanning 1–61 (DGYILNSKGC…RWTSSKNKCN (61 aa)) is the LCN-type CS-alpha/beta domain. Intrachain disulfides connect Cys-10–Cys-60, Cys-14–Cys-35, Cys-21–Cys-42, and Cys-25–Cys-44.

It belongs to the long (4 C-C) scorpion toxin superfamily. Sodium channel inhibitor family. Beta subfamily. Expressed by the venom gland.

It localises to the secreted. Functionally, depressant insect beta-toxins cause a transient contraction paralysis followed by a slow flaccid paralysis. They bind voltage-independently at site-4 of sodium channels (Nav) and shift the voltage of activation toward more negative potentials thereby affecting sodium channel activation and promoting spontaneous and repetitive firing. This toxin is active only on insects. The chain is Insect toxin BsIT3 from Hottentotta tamulus sindicus (Scorpion).